The sequence spans 358 residues: Probable (S)-tetrahydroprotoberberine N-methyltransferase 2 (358 aa).

S-adenosyl-L-methionine contacts are provided by S98, G136, N160, Q164, D186, V187, and I202. The active site involves C333.

It belongs to the CFA/CMAS family. Homodimer.

Its subcellular location is the cytoplasm. The enzyme catalyses (S)-stylopine + S-adenosyl-L-methionine = (S)-cis-N-methylstylopine + S-adenosyl-L-homocysteine. It carries out the reaction (S)-tetrahydropalmatine + S-adenosyl-L-methionine = (S)-cis-N-methyltetrahydropalmatine + S-adenosyl-L-homocysteine. It participates in alkaloid biosynthesis. N-methyltransferase with a strict substrate specificity for (R,S)-tetrahydropalmatine or (R,S)-stylopine. In Papaver bracteatum (Great scarlet poppy), this protein is Probable (S)-tetrahydroprotoberberine N-methyltransferase 2.